Reading from the N-terminus, the 1452-residue chain is ABC multidrug transporter A (1452 aa).

The disordered stretch occupies residues 1-20 (MNESHEAGKNSSTNVEEREE). 5 N-linked (GlcNAc...) asparagine glycosylation sites follow: N2, N10, N228, N287, and N311. In terms of domain architecture, ABC transporter 1 spans 110–363 (LKTLSLARIA…FLQMGFVCPD (254 aa)). The next 6 helical transmembrane spans lie at 474–494 (VTIS…SIFY), 508–528 (ALLF…MLTL), 554–574 (MIMD…VLYF), 583–603 (GAFF…SMFF), 616–636 (VLPF…FAIP), and 725–745 (IGVI…ATDF). In terms of domain architecture, ABC transporter 2 spans 802–1044 (FQWKDVCFDI…ILIDYFVRNG (243 aa)). ATP is bound at residue 838–845 (GVSGAGKT). The next 5 membrane-spanning stretches (helical) occupy residues 1153 to 1173 (ALCV…PNTI), 1183 to 1203 (IFML…HFVA), 1223 to 1243 (FLIA…VLMF), 1271 to 1291 (LMIW…IAAF), and 1297 to 1317 (AGNL…VLAT). N1350, N1365, and N1391 each carry an N-linked (GlcNAc...) asparagine glycan. A helical membrane pass occupies residues 1418–1438 (FGLMWVFIVFNIFAACSLYWW).

Belongs to the ABC transporter superfamily. ABCG family. PDR (TC 3.A.1.205) subfamily.

The protein resides in the membrane. In terms of biological role, ABC transporter that seems not to be involved in the efflux of toxic substances, at least not the classical compounds such as itraconazole, amphotericin B, voriconazole, posaconazole, ravuconazole, or echinocandins. The chain is ABC multidrug transporter A from Aspergillus fumigatus (Neosartorya fumigata).